We begin with the raw amino-acid sequence, 716 residues long: DNA ligase (716 aa).

NAD(+) is bound by residues 49-53 (DAEYD), 98-99 (SL), and Glu131. The active-site N6-AMP-lysine intermediate is Lys133. Arg154, Glu191, Lys308, and Lys332 together coordinate NAD(+). Residues Cys437, Cys439, Cys461, and Cys467 each coordinate Zn(2+). The region spanning 638 to 716 (KRHSPIATKT…EDEWLQLIAE (79 aa)) is the BRCT domain.

Belongs to the NAD-dependent DNA ligase family. LigA subfamily. It depends on Mg(2+) as a cofactor. The cofactor is Mn(2+).

It carries out the reaction NAD(+) + (deoxyribonucleotide)n-3'-hydroxyl + 5'-phospho-(deoxyribonucleotide)m = (deoxyribonucleotide)n+m + AMP + beta-nicotinamide D-nucleotide.. DNA ligase that catalyzes the formation of phosphodiester linkages between 5'-phosphoryl and 3'-hydroxyl groups in double-stranded DNA using NAD as a coenzyme and as the energy source for the reaction. It is essential for DNA replication and repair of damaged DNA. In Bradyrhizobium sp. (strain BTAi1 / ATCC BAA-1182), this protein is DNA ligase.